A 432-amino-acid chain; its full sequence is MLDKIEVPIEAIAAREILDSRGRPTIEAEVLLESGALGLAQVPSGASTGSFEAHELRDDDPQRYGGKGVLKAVRNVHEKIVPVLEGMNAFDQASIDLAMIDRDGTANKRELGANAILAVSLATAKAAAADLGLPLYRYLGGPMANVLPVPMMNVINGGSHADNNVDFQEFMIFPIGADSFKEGLRWGAEVFAALGKALHERKLLTGVGDEGGYAPNLASNQEALDILIESIERAGYKPGSQVALAMDVAASEFYRDGQYIYDGSAHSPAEMVDFLASLVERYPIISIEDGLHEEDWDNWKLLTDKLGARIQLVGDDLMVTNPIRLQKAIDLGIANSILIKLNQIGSLTETLQTIALATRHGYRSVISHRSGETEDTTIADLAVATNAGQIKTGSLSRSERVAKYNRLLRIEEELGDRAVYAPKVGLGPKFLA.

A (2R)-2-phosphoglycerate-binding site is contributed by glutamine 168. The active-site Proton donor is glutamate 210. Mg(2+)-binding residues include aspartate 247, glutamate 288, and aspartate 315. Positions 340, 369, 370, and 391 each coordinate (2R)-2-phosphoglycerate. Catalysis depends on lysine 340, which acts as the Proton acceptor.

It belongs to the enolase family. Mg(2+) is required as a cofactor.

Its subcellular location is the cytoplasm. The protein resides in the secreted. The protein localises to the cell surface. The enzyme catalyses (2R)-2-phosphoglycerate = phosphoenolpyruvate + H2O. It functions in the pathway carbohydrate degradation; glycolysis; pyruvate from D-glyceraldehyde 3-phosphate: step 4/5. Functionally, catalyzes the reversible conversion of 2-phosphoglycerate (2-PG) into phosphoenolpyruvate (PEP). It is essential for the degradation of carbohydrates via glycolysis. The protein is Enolase of Microcystis aeruginosa (strain NIES-843 / IAM M-2473).